The following is a 169-amino-acid chain: Major fimbrial subunit SMF-1 (169 aa).

A signal peptide spans 1 to 11 (MLAAAPLAANA).

The protein belongs to the fimbrial protein family.

It localises to the fimbrium. Its function is as follows. Involved in adherence to eukaryotic epithelial cells and abiotic surfaces. Mediates agglutination of animal red blood cells. In Stenotrophomonas maltophilia (strain K279a), this protein is Major fimbrial subunit SMF-1.